The sequence spans 373 residues: Flagellar P-ring protein (373 aa).

The first 26 residues, 1-26 (MKLFFRFVTLVAVLAMSLANVAPAWA), serve as a signal peptide directing secretion.

Belongs to the FlgI family. The basal body constitutes a major portion of the flagellar organelle and consists of four rings (L,P,S, and M) mounted on a central rod.

The protein resides in the periplasm. It localises to the bacterial flagellum basal body. In terms of biological role, assembles around the rod to form the L-ring and probably protects the motor/basal body from shearing forces during rotation. The sequence is that of Flagellar P-ring protein from Rhizobium johnstonii (strain DSM 114642 / LMG 32736 / 3841) (Rhizobium leguminosarum bv. viciae).